Reading from the N-terminus, the 125-residue chain is Large ribosomal subunit protein bL17 (125 aa).

This sequence belongs to the bacterial ribosomal protein bL17 family. As to quaternary structure, part of the 50S ribosomal subunit. Contacts protein L32.

This Marinomonas sp. (strain MWYL1) protein is Large ribosomal subunit protein bL17.